The primary structure comprises 64 residues: Hypoxia-inducible lipid droplet-associated protein (64 aa).

Residues 1–37 form a required for targeting to lipid droplets region; the sequence is MKFMLNLYVLGIMLTLLSIFVRVMESLGGLLESPLPG. A helical transmembrane segment spans residues 7-24; that stretch reads LYVLGIMLTLLSIFVRVM. Polar residues predominate over residues 42-51; sequence TRGQLANTQP. Residues 42–64 form a disordered region; the sequence is TRGQLANTQPPKGLPDHPSRGVQ. Positions 55–64 are enriched in basic and acidic residues; that stretch reads LPDHPSRGVQ.

It localises to the lipid droplet. The protein localises to the secreted. Its subcellular location is the membrane. Functionally, increases intracellular lipid accumulation. Stimulates expression of cytokines including IL6, MIF and VEGFA. Enhances cell growth and proliferation. This chain is Hypoxia-inducible lipid droplet-associated protein (Hilpda), found in Mus musculus (Mouse).